Reading from the N-terminus, the 1091-residue chain is MDKSKQMNINNLSNIPEVIDPGITIPIYEEEYENNGESNSQLQQQPQKLGSYRSRAGKFSNTLSNLLPSISAKLHHSKKNSHGKNGAEFSSSNNSSQSTVASKTPRASPSRSKMMESSIDGVTMDRPGSLTPPQDMEKLVHFPDSSNNFLIPAPRGSSDSFNLPHQISRTRNNTMSSQITSISSIAPKPRTSSGIWSSNASANDPMQQHLLQQLQPTTSNNTTNSNTLNDYSTKTAYFDNMVSTSGSQMADNKMNTNNLAIPNSVWSNTRQRSQSNASSIYTDAPLYEQPARASISSHYTIPTQESPLIADEIDPQSINWVTMDPTVPSINQISNLLPTNTISISNVFPLQHQQPQLNNAINLTSTSLATLCSKYGEVISARTLRNLNMALVEFSSVESAVKALDSLQGKEVSMIGAPSKISFAKILPMHQQPPQFLLNSQGLPLGLENNNLQPQPLLQEQLFNGAVTFQQQGNVSIPVFNQQSQQSQHQNHSSGSAGFSNVLHGYNNNNSMHGNNNNSANEKEQCPFPLPPPNVNEKEDLLREIIELFEANSDEYQINSLIKKSLNHKGTSDTQNFGPLPEPLSGREFDPPKLRELRKSIDSNAFSDLEIEQLAIAMLDELPELSSDYLGNTIVQKLFEHSSDIIKDIMLRKTSKYLTSMGVHKNGTWACQKMITMAHTPRQIMQVTQGVKDYCTPLINDQFGNYVIQCVLKFGFPWNQFIFESIIANFWVIVQNRYGARAVRACLEAHDIVTPEQSIVLSAMIVTYAEYLSTNSNGALLVTWFLDTSVLPNRHSILAPRLTKRIVELCGHRLASLTILKVLNYRGDDNARKIILDSLFGNVNAHDSSPPKELTKLLCETNYGPTFVHKVLAMPLLEDDLRAHIIKQVRKVLTDSTQIQPSRRLLEEVGLASPSSTHNKTKQQQQQHHNSSISHMFATPDTSGQHMRGLSVSSVKSGGSKHTTMNTTTTNGSSASTLSPGQPLNANSNSSMGYFSYPGVFPVSGFSGNASNGYAMNNDDLSSQFDMLNFNNGTRLSLPQLSLTNHNNTTMELVNNVGSSQPHTNNNNNNNNTNYNDDNTVFETLTLHSAN.

2 disordered regions span residues 31 to 51 and 75 to 131; these read EYEN…KLGS and HHSK…GSLT. Over residues 99-111 the composition is skewed to polar residues; that stretch reads TVASKTPRASPSR. The residue at position 129 (S129) is a Phosphoserine. T131 is modified (phosphothreonine). A phosphoserine mark is found at S160 and S168. The 87-residue stretch at 340–426 folds into the RRM domain; it reads NTISISNVFP…APSKISFAKI (87 aa). 2 stretches are compositionally biased toward low complexity: residues 482–494 and 507–520; these read QQSQ…NHSS and NNNN…NNSA. 2 disordered regions span residues 482–534 and 568–591; these read QQSQ…PPPN and HKGT…EFDP. Residues 557-913 form the PUM-HD domain; the sequence is QINSLIKKSL…RLLEEVGLAS (357 aa). Residues 568 to 577 show a composition bias toward polar residues; sequence HKGTSDTQNF. 5 Pumilio repeats span residues 617–652, 653–689, 690–724, 725–760, and 801–837; these read AMLD…IMLR, KTSK…QVTQ, GVKD…FIFE, SIIA…QSIV, and RLTK…IILD. The tract at residues 911-981 is disordered; the sequence is LASPSSTHNK…GSSASTLSPG (71 aa). S913 carries the phosphoserine modification. Composition is skewed to low complexity over residues 915-935 and 951-979; these read SSTH…SISH and SVSS…STLS.

The chain is Protein JSN1 (JSN1) from Saccharomyces cerevisiae (strain ATCC 204508 / S288c) (Baker's yeast).